Consider the following 133-residue polypeptide: Small ribosomal subunit protein uS8 (133 aa).

It belongs to the universal ribosomal protein uS8 family. In terms of assembly, part of the 30S ribosomal subunit. Contacts proteins S5 and S12.

In terms of biological role, one of the primary rRNA binding proteins, it binds directly to 16S rRNA central domain where it helps coordinate assembly of the platform of the 30S subunit. The protein is Small ribosomal subunit protein uS8 of Endomicrobium trichonymphae.